Reading from the N-terminus, the 269-residue chain is Phosphate import ATP-binding protein PstB 1 (269 aa).

The ABC transporter domain occupies 25 to 264 (LSTEDLHVFY…PQVDLTNDYI (240 aa)). 57 to 64 (GPSGSGKS) is an ATP binding site.

This sequence belongs to the ABC transporter superfamily. Phosphate importer (TC 3.A.1.7) family. The complex is composed of two ATP-binding proteins (PstB), two transmembrane proteins (PstC and PstA) and a solute-binding protein (PstS).

Its subcellular location is the cell membrane. The catalysed reaction is phosphate(out) + ATP + H2O = ADP + 2 phosphate(in) + H(+). Its function is as follows. Part of the ABC transporter complex PstSACB involved in phosphate import. Responsible for energy coupling to the transport system. The polypeptide is Phosphate import ATP-binding protein PstB 1 (Lactiplantibacillus plantarum (strain ATCC BAA-793 / NCIMB 8826 / WCFS1) (Lactobacillus plantarum)).